A 762-amino-acid polypeptide reads, in one-letter code: Polyadenylate-binding protein, cytoplasmic and nuclear (762 aa).

The tract at residues 39–58 (TGEEIDTAGPTPSSAAPHPQ) is disordered. Over residues 48-58 (PTPSSAAPHPQ) the composition is skewed to low complexity. RRM domains lie at 61–139 (ASLY…WSQR), 149–226 (GNVF…HHIP), 242–320 (TNIY…RAQK), and 346–470 (VNLY…LAQR). Disordered stretches follow at residues 376–429 (KVMR…KSKL), 596–663 (SALA…AGAP), and 740–762 (VRQQ…EEKA). Over residues 389–425 (GESKEGEESEKNKENKPEEKEGDDSKPEEKEGEDSKS) the composition is skewed to basic and acidic residues. Residues 600–612 (GGRGGPAGRGPMQ) show a composition bias toward gly residues. The span at 645–663 (AAGRAPAGAPAGARGAGAP) shows a compositional bias: low complexity. The 78-residue stretch at 664 to 741 (EGLQGQLAAV…ALAVYDDYVR (78 aa)) folds into the PABC domain. Residues 753–762 (SKEEKTEEKA) show a composition bias toward basic and acidic residues.

The protein belongs to the polyadenylate-binding protein type-1 family.

It is found in the cytoplasm. The protein resides in the nucleus. Binds the poly(A) tail of mRNA. Appears to be an important mediator of the multiple roles of the poly(A) tail in mRNA biogenesis, stability and translation. In the nucleus, involved in both mRNA cleavage and polyadenylation. Is also required for efficient mRNA export to the cytoplasm. Acts in concert with a poly(A)-specific nuclease (PAN) to affect poly(A) tail shortening, which may occur concomitantly with either nucleocytoplasmic mRNA transport or translational initiation. In the cytoplasm, stimulates translation initiation and regulates mRNA decay through translation termination-coupled poly(A) shortening, probably mediated by PAN. The chain is Polyadenylate-binding protein, cytoplasmic and nuclear (PAB1) from Pyricularia oryzae (strain 70-15 / ATCC MYA-4617 / FGSC 8958) (Rice blast fungus).